The primary structure comprises 57 residues: Conotoxin Cal6.34 (57 aa).

Residues 1 to 22 (MKLTCVLIVAVLILTACQVIAA) form the signal peptide. 3 disulfides stabilise this stretch: Cys26-Cys37, Cys29-Cys43, and Cys36-Cys54.

It belongs to the conotoxin O1 superfamily. Expressed by the venom duct.

Its subcellular location is the secreted. Functionally, probable neurotoxin. This is Conotoxin Cal6.34 from Californiconus californicus (California cone).